A 230-amino-acid chain; its full sequence is Ureidoacrylate amidohydrolase RutB (230 aa).

Aspartate 24 acts as the Proton acceptor in catalysis. Residue lysine 133 is part of the active site. The active-site Nucleophile is the cysteine 166.

Belongs to the isochorismatase family. RutB subfamily.

It carries out the reaction (Z)-3-ureidoacrylate + H2O + H(+) = (Z)-3-aminoacrylate + NH4(+) + CO2. The catalysed reaction is (Z)-3-ureidoacrylate + H2O = (Z)-3-aminoacrylate + carbamate + H(+). The enzyme catalyses (Z)-2-methylureidoacrylate + H2O + H(+) = (Z)-2-methylaminoacrylate + NH4(+) + CO2. Its function is as follows. Hydrolyzes ureidoacrylate to form aminoacrylate and carbamate. The carbamate hydrolyzes spontaneously, thereby releasing one of the nitrogen atoms of the pyrimidine ring as ammonia and one of its carbon atoms as CO2. The polypeptide is Ureidoacrylate amidohydrolase RutB (Escherichia coli O103:H2 (strain 12009 / EHEC)).